Here is a 351-residue protein sequence, read N- to C-terminus: Hydroxymethylglutaryl-CoA synthase (351 aa).

Residue D28 coordinates (3S)-3-hydroxy-3-methylglutaryl-CoA. Catalysis depends on E80, which acts as the Proton donor/acceptor. (3S)-3-hydroxy-3-methylglutaryl-CoA contacts are provided by C112 and T153. C112 serves as the catalytic Acyl-thioester intermediate. CoA is bound at residue R199. Residues T201 and H234 each contribute to the (3S)-3-hydroxy-3-methylglutaryl-CoA site. H234 serves as the catalytic Proton donor/acceptor. K239 lines the CoA pocket. Residues R243, N266, and S296 each contribute to the (3S)-3-hydroxy-3-methylglutaryl-CoA site.

This sequence belongs to the thiolase-like superfamily. Archaeal HMG-CoA synthase family. Interacts with acetoacetyl-CoA thiolase that catalyzes the precedent step in the pathway and with a DUF35 protein. The acetoacetyl-CoA thiolase/HMG-CoA synthase complex channels the intermediate via a fused CoA-binding site, which allows for efficient coupling of the endergonic thiolase reaction with the exergonic HMGCS reaction.

The catalysed reaction is acetoacetyl-CoA + acetyl-CoA + H2O = (3S)-3-hydroxy-3-methylglutaryl-CoA + CoA + H(+). The protein operates within metabolic intermediate biosynthesis; (R)-mevalonate biosynthesis; (R)-mevalonate from acetyl-CoA: step 2/3. Functionally, catalyzes the condensation of acetyl-CoA with acetoacetyl-CoA to form 3-hydroxy-3-methylglutaryl-CoA (HMG-CoA). Functions in the mevalonate (MVA) pathway leading to isopentenyl diphosphate (IPP), a key precursor for the biosynthesis of isoprenoid compounds that are building blocks of archaeal membrane lipids. The sequence is that of Hydroxymethylglutaryl-CoA synthase from Picrophilus torridus (strain ATCC 700027 / DSM 9790 / JCM 10055 / NBRC 100828 / KAW 2/3).